Reading from the N-terminus, the 279-residue chain is Protein phosphatase 1 regulatory subunit 3E (279 aa).

Phosphoserine occurs at positions 16 and 33. The segment at 28-86 is disordered; it reads RSQRPSLEEEPEEEPGEGGTRFGARSRAHAPSRGRRARSAPAGGGGARAPRSRSPDTRK. Over residues 51–65 the composition is skewed to basic residues; sequence ARSRAHAPSRGRRAR. Ser-66 is subject to Phosphoserine. The PP1-binding motif motif lies at 87–90; that stretch reads RVRF. Residues 154-259 form the CBM21 domain; the sequence is AARLLTQRIC…NNGGRDYALR (106 aa). The tract at residues 176 to 198 is glycogen-binding motif; the sequence is GSARVVDLAYEKRVSVRWSADGW. The substrate-binding motif stretch occupies residues 248–256; the sequence is WDNNGGRDY.

In terms of tissue distribution, expressed in skeletal muscle and heart with barely detectable levels in liver.

Its function is as follows. Acts as a glycogen-targeting subunit for PP1. PP1 is involved in glycogen metabolism and contributes to the activation of glycogen synthase leading to an increase in glycogen synthesis. The polypeptide is Protein phosphatase 1 regulatory subunit 3E (PPP1R3E) (Homo sapiens (Human)).